The following is a 275-amino-acid chain: Vitamin B12-binding protein (275 aa).

The first 19 residues, 1 to 19, serve as a signal peptide directing secretion; it reads MMNKICLYLPLFFSSLTMA. The region spanning 25–272 is the Fe/B12 periplasmic-binding domain; the sequence is RVISLAPHAT…EVCEHFESVK (248 aa). Cysteine 185 and cysteine 265 are disulfide-bonded.

This sequence belongs to the BtuF family. In terms of assembly, the complex is composed of two ATP-binding proteins (BtuD), two transmembrane proteins (BtuC) and a solute-binding protein (BtuF).

It localises to the periplasm. Its function is as follows. Part of the ABC transporter complex BtuCDF involved in vitamin B12 import. Binds vitamin B12 and delivers it to the periplasmic surface of BtuC. The sequence is that of Vitamin B12-binding protein from Vibrio parahaemolyticus serotype O3:K6 (strain RIMD 2210633).